The sequence spans 583 residues: Radixin (583 aa).

Residues isoleucine 5 to arginine 295 form the FERM domain. A 1,2-diacyl-sn-glycero-3-phospho-(1D-myo-inositol) is bound at residue lysine 60–lysine 63. Lysine 83 bears the N6-succinyllysine mark. Lysine 278 contacts a 1,2-diacyl-sn-glycero-3-phospho-(1D-myo-inositol). 3 disordered regions span residues arginine 310–glutamate 336, glutamate 374–alanine 407, and lysine 458–lysine 526. Basic and acidic residues predominate over residues glutamate 374–lysine 400. Pro residues predominate over residues alanine 469–proline 480. Composition is skewed to basic and acidic residues over residues glutamate 483 to asparagine 492 and methionine 506 to asparagine 525. Position 564 is a phosphothreonine; by ROCK2 (threonine 564).

Interacts with CPNE1 (via VWFA domain) and CPNE4 (via VWFA domain). Binds NHERF1. Interacts with NHERF1, NHERF2, LAYN, MME/NEP and ICAM2. Interacts (via FERM domain) with SPN/CD43 cytoplasmic tail. Interacts with CD44. Interacts with CLIC5; may work together in a complex which also includes EZR and MYO6 to stabilize linkages between the plasma membrane and subjacent actin cytoskeleton at the base of stereocilia. Post-translationally, phosphorylated by tyrosine-protein kinases. Phosphorylation by ROCK2 suppresses the head-to-tail association of the N-terminal and C-terminal halves resulting in an opened conformation which is capable of actin and membrane-binding.

The protein resides in the cell membrane. The protein localises to the cytoplasm. Its subcellular location is the cytoskeleton. It localises to the cleavage furrow. It is found in the cell projection. The protein resides in the microvillus. The protein localises to the stereocilium. A head-to-tail association, of the N-terminal and C-terminal halves results in a closed conformation (inactive form) which is incapable of actin or membrane-binding. Its function is as follows. Probably plays a crucial role in the binding of the barbed end of actin filaments to the plasma membrane. This Sus scrofa (Pig) protein is Radixin (RDX).